The primary structure comprises 76 residues: Esculentin-2MT3 (76 aa).

The signal sequence occupies residues 1–22 (MFTLKKSMLLLFFLGTISLSLC). The propeptide at 23–37 (EEERNADEDDGEKEV) is removed in mature form. Cys70 and Cys76 are joined by a disulfide.

The protein belongs to the frog skin active peptide (FSAP) family. Esculentin subfamily. As to expression, expressed by the skin glands.

Its subcellular location is the secreted. In terms of biological role, antimicrobial peptide. This chain is Esculentin-2MT3, found in Amolops mantzorum (Sichuan torrent frog).